The sequence spans 250 residues: Probable transcriptional regulatory protein ckrop_1032 (250 aa).

The disordered stretch occupies residues 1–22 (MSGHSKWATTKHKKAANDAKRG).

It belongs to the TACO1 family.

Its subcellular location is the cytoplasm. The chain is Probable transcriptional regulatory protein ckrop_1032 from Corynebacterium kroppenstedtii (strain DSM 44385 / JCM 11950 / CIP 105744 / CCUG 35717).